A 786-amino-acid chain; its full sequence is MDAPVPLSLSTLLELCTNLLQKSVNKSNGRFTAQLVHCRVIKSGLMFSVYLMNNLMNVYSKTGYALHARKLFDEMPLRTAFSWNTVLSAYSKRGDMDSTCEFFDQLPQRDSVSWTTMIVGYKNIGQYHKAIRVMGDMVKEGIEPTQFTLTNVLASVAATRCMETGKKVHSFIVKLGLRGNVSVSNSLLNMYAKCGDPMMAKFVFDRMVVRDISSWNAMIALHMQVGQMDLAMAQFEQMAERDIVTWNSMISGFNQRGYDLRALDIFSKMLRDSLLSPDRFTLASVLSACANLEKLCIGKQIHSHIVTTGFDISGIVLNALISMYSRCGGVETARRLIEQRGTKDLKIEGFTALLDGYIKLGDMNQAKNIFVSLKDRDVVAWTAMIVGYEQHGSYGEAINLFRSMVGGGQRPNSYTLAAMLSVASSLASLSHGKQIHGSAVKSGEIYSVSVSNALITMYAKAGNITSASRAFDLIRCERDTVSWTSMIIALAQHGHAEEALELFETMLMEGLRPDHITYVGVFSACTHAGLVNQGRQYFDMMKDVDKIIPTLSHYACMVDLFGRAGLLQEAQEFIEKMPIEPDVVTWGSLLSACRVHKNIDLGKVAAERLLLLEPENSGAYSALANLYSACGKWEEAAKIRKSMKDGRVKKEQGFSWIEVKHKVHVFGVEDGTHPEKNEIYMTMKKIWDEIKKMGYVPDTASVLHDLEEEVKEQILRHHSEKLAIAFGLISTPDKTTLRIMKNLRVCNDCHTAIKFISKLVGREIIVRDTTRFHHFKDGFCSCRDYW.

16 PPR repeats span residues 48 to 78 (SVYL…MPLR), 79 to 109 (TAFS…LPQR), 110 to 144 (DSVS…GIEP), 145 to 179 (TQFT…GLRG), 180 to 214 (NVSV…DISS), 215 to 241 (WNAM…MAER), 242 to 276 (DIVT…SLLS), 278 to 312 (DRFT…GFDI), 313 to 347 (SGIV…DLKI), 350 to 376 (FTAL…LKDR), 377 to 411 (DVVA…GQRP), 412 to 446 (NSYT…GEIY), 447 to 477 (SVSV…IRCE), 479 to 513 (DTVS…GLRP), 514 to 548 (DHIT…DKII), and 550 to 580 (TLSH…MPIE). Positions 585 to 660 (TWGSLLSACR…EQGFSWIEVK (76 aa)) are type E motif. A type E(+) motif region spans residues 661 to 691 (HKVHVFGVEDGTHPEKNEIYMTMKKIWDEIK). Residues 692–786 (KMGYVPDTAS…DGFCSCRDYW (95 aa)) form a type DYW motif region.

It belongs to the PPR family. PCMP-H subfamily.

The chain is Pentatricopeptide repeat-containing protein At2g22070 (PCMP-H41) from Arabidopsis thaliana (Mouse-ear cress).